The primary structure comprises 218 residues: Uracil-DNA glycosylase (218 aa).

Residue Asp60 is the Proton acceptor of the active site.

The protein belongs to the uracil-DNA glycosylase (UDG) superfamily. UNG family.

It localises to the cytoplasm. It carries out the reaction Hydrolyzes single-stranded DNA or mismatched double-stranded DNA and polynucleotides, releasing free uracil.. In terms of biological role, excises uracil residues from the DNA which can arise as a result of misincorporation of dUMP residues by DNA polymerase or due to deamination of cytosine. This is Uracil-DNA glycosylase from Shewanella oneidensis (strain ATCC 700550 / JCM 31522 / CIP 106686 / LMG 19005 / NCIMB 14063 / MR-1).